The primary structure comprises 47 residues: Defensin Tk-AMP-D1.1 (47 aa).

Cystine bridges form between cysteine 3-cysteine 47, cysteine 14-cysteine 34, cysteine 20-cysteine 41, and cysteine 24-cysteine 43.

Plant defense peptide. The sequence is that of Defensin Tk-AMP-D1.1 from Triticum kiharae (Wheat).